Reading from the N-terminus, the 452-residue chain is Isocitrate dehydrogenase [NADP], mitochondrial (452 aa).

Residues 1 to 39 constitute a mitochondrion transit peptide; the sequence is MAGYLRVVRSLCRASGSRPAWAPAALTAPTSQEQTRRHY. An N6-acetyllysine mark is found at Lys-45, Lys-48, Lys-67, and Lys-69. Lys-80 and Lys-106 each carry N6-acetyllysine; alternate. Lys-80 and Lys-106 each carry N6-succinyllysine; alternate. NADP(+) contacts are provided by residues 115 to 117 and Arg-122; that span reads TIT. Residue Thr-117 coordinates substrate. Residues 134–140 and Arg-149 each bind substrate; that span reads SPNGTIR. Lys-155 carries the post-translational modification N6-acetyllysine. Lys-166 is subject to N6-acetyllysine; alternate. Lys-166 carries the N6-succinyllysine; alternate modification. Arg-172 lines the substrate pocket. N6-acetyllysine; alternate is present on residues Lys-180 and Lys-193. Lys-180 and Lys-193 each carry N6-succinyllysine; alternate. The residue at position 199 (Lys-199) is an N6-acetyllysine. Position 256 is an N6-acetyllysine; alternate (Lys-256). Residue Lys-256 is modified to N6-succinyllysine; alternate. 4 positions are modified to N6-acetyllysine: Lys-263, Lys-272, Lys-275, and Lys-280. Lys-282 is modified (N6-acetyllysine; alternate). Residue Lys-282 is modified to N6-succinyllysine; alternate. Asp-291 is a Mn(2+) binding site. Lys-299 contributes to the NADP(+) binding site. Asp-314 provides a ligand contact to Mn(2+). NADP(+) is bound by residues 349–354 and Asn-367; that span reads GTVTRH. At Lys-384 the chain carries N6-acetyllysine; alternate. The residue at position 384 (Lys-384) is an N6-succinyllysine; alternate. Lys-400, Lys-413, and Lys-442 each carry N6-acetyllysine.

The protein belongs to the isocitrate and isopropylmalate dehydrogenases family. In terms of assembly, homodimer. The cofactor is Mg(2+). It depends on Mn(2+) as a cofactor. In terms of processing, acetylation at Lys-413 dramatically reduces catalytic activity. Deacetylated by SIRT3.

It localises to the mitochondrion. It carries out the reaction D-threo-isocitrate + NADP(+) = 2-oxoglutarate + CO2 + NADPH. Functionally, plays a role in intermediary metabolism and energy production. It may tightly associate or interact with the pyruvate dehydrogenase complex. The protein is Isocitrate dehydrogenase [NADP], mitochondrial (IDH2) of Macaca fascicularis (Crab-eating macaque).